Consider the following 218-residue polypeptide: Peroxiredoxin-like 2A (218 aa).

The segment at 3–101 is thioredoxin-like fold; that stretch reads MWSIGVGAVG…DELGVPLYAV (99 aa). Catalysis depends on redox-active residues Cys-74 and Cys-77.

It belongs to the peroxiredoxin-like PRXL2 family. PRXL2A subfamily. Expressed in kidney, liver, skin, and brain. Widely expressed with highest levels detected in adipose tissue.

The protein localises to the cytoplasm. Its subcellular location is the secreted. Functionally, involved in redox regulation of the cell. Acts as an antioxidant. Inhibits TNFSF11-induced NFKB1 and JUN activation and osteoclast differentiation. May affect bone resorption and help to maintain bone mass. Acts as a negative regulator of macrophage-mediated inflammation by inhibiting macrophage production of inflammatory cytokines, probably through suppression of the MAPK signaling pathway. This Mus musculus (Mouse) protein is Peroxiredoxin-like 2A (Prxl2a).